The sequence spans 262 residues: Small ribosomal subunit protein eS4x (262 aa).

Positions 42–104 constitute an S4 RNA-binding domain; sequence LPLVLIIRNR…TNENFRLLYD (63 aa).

It belongs to the eukaryotic ribosomal protein eS4 family.

It localises to the cytoplasm. The sequence is that of Small ribosomal subunit protein eS4x (RPS4D) from Arabidopsis thaliana (Mouse-ear cress).